The chain runs to 817 residues: Two pore calcium channel protein 1 (817 aa).

Residues M1 to Y101 lie on the Cytoplasmic side of the membrane. The disordered stretch occupies residues P22–H66. Residues L102–L122 traverse the membrane as a helical segment. The Extracellular portion of the chain corresponds to L123 to R137. The helical transmembrane segment at T138–M158 threads the bilayer. The Cytoplasmic segment spans residues K159–K172. A helical transmembrane segment spans residues R173–V193. Over R194–T202 the chain is Extracellular. A helical membrane pass occupies residues R203–R221. The Cytoplasmic portion of the chain corresponds to N222–D235. Residues I236–S256 form a helical membrane-spanning segment. The Extracellular segment spans residues T257 to Y263. An intramembrane region (helical; Pore-forming) is located at residues F264–M287. At M288–C298 the chain is on the extracellular side. Residues V299–V319 traverse the membrane as a helical segment. The Cytoplasmic portion of the chain corresponds to V320–Q445. Residues Y446 to L466 traverse the membrane as a helical segment. Over K467–Y480 the chain is Extracellular. A helical membrane pass occupies residues L481–V501. The Cytoplasmic portion of the chain corresponds to E502–L504. The helical transmembrane segment at S505 to T527 threads the bilayer. The Extracellular segment spans residues L528–F535. Residues I536–L550 form a helical membrane-spanning segment. The Cytoplasmic segment spans residues K551–T574. The chain crosses the membrane as a helical span at residues L575 to S595. The Extracellular portion of the chain corresponds to P596 to N630. The segment at residues F631–M654 is an intramembrane region (helical; Pore-forming). Residues E655 to T671 lie on the Extracellular side of the membrane. The chain crosses the membrane as a helical span at residues F672–V692. Residues F693–T817 lie on the Cytoplasmic side of the membrane. Residues S770 to L794 are a coiled coil. The disordered stretch occupies residues H785–T817. Residues A802–T817 show a composition bias toward polar residues.

The protein belongs to the calcium channel alpha-1 subunit (TC 1.A.1.11) family. Two pore calcium channel subfamily. Dimer. Interacts with MTOR; the interaction is required for TPCN1 ATP sensitivity. Interacts with STX7, STX8 and STX12. Interacts with JPT2. Found in a complex with LSM12, TPCN1 and TPCN2. N-glycosylated. Widely expressed. Expressed at relatively high level in kidney, liver and lung, and in the kidney it is expressed at inner medullary collecting ducts.

It is found in the lysosome membrane. Its subcellular location is the endosome membrane. It localises to the early endosome membrane. The protein localises to the recycling endosome membrane. It catalyses the reaction Na(+)(in) = Na(+)(out). The enzyme catalyses Ca(2+)(in) = Ca(2+)(out). Na(+) current is inhibited by ATP in a MTORC-dependent manner. ATP sensitivity is independent of PI(3,5)P2. Probably regulated by Mg(2+) ions, cytosolic Mg(2+) selectively inhibits outward current while lysosomal Mg(2+) modestly inhibits both the outward and inward currents. In the absence of Mg(2+), NAADP readily activates TPCN2, with properties similar to PI(3,5)P2. Both current elicited by PI(3,5)P2 as well as NAADP are inhibited by tetrandrine. Functionally, intracellular channel initially characterized as a non-selective Ca(2+)-permeable channel activated by NAADP (nicotinic acid adenine dinucleotide phosphate), it is also a voltage-gated highly-selective Na(+) channel activated directly by PI(3,5)P2 (phosphatidylinositol 3,5-bisphosphate) that senses pH changes and confers electrical excitability to organelles. Localizes to the early and recycling endosomes membranes where it plays a role in the uptake and processing of proteins and regulates organellar membrane excitability, membrane trafficking and pH homeostasis. Ion selectivity is not fixed but rather agonist-dependent and under defined ionic conditions, can be readily activated by both NAADP and PI(3,5)P2. Required for mTOR-dependent nutrient sensing. The protein is Two pore calcium channel protein 1 (Tpcn1) of Rattus norvegicus (Rat).